The sequence spans 131 residues: uncharacterized protein (131 aa).

This is an uncharacterized protein from Staphylococcus aureus.